The following is a 2118-amino-acid chain: MRNFKGVNFATLLCSKEETQQLLPDLKEFLSRSRTDFPSSRTDAERRQICDTILRACTQQLTAKLDCPGHLRSILDLAELACDGYLLSTPQRPPLYLERILFILLRNGSTQGSPDTVLRLAQPLHACLVQNSGEAAPQDYEAVTRGSFSLFWKGAEALLERRAAFSTRLNALSFLVLLEDGSVPCEVPHFASPTACRLVAAYQLYDATGQGLDEADADFLYEVLSRHLIRVLVGEGGSSPGPLSPQRALCLLEITLEHCRRLCWNHHHRQAARAVERARNHLEKTSVAPSLQLCQMGVELLEAVEERPGAVAQLLRKAAAVLINSIEAPSPPLRALYDSCQFFLSGLERGIRRHCGLDAILSLFAFLGGYSSLVRHLREVSEASSKQQQCLLQMHFQGFHLFTGIVYDFAQGCQATELAQLVDGCRSAAVWMLEALEGLSGGELADYLSMTASYTSNLAYSFFSQKLYEEACVISEPVCQHLGSATSGACPEVPPEKLHRCFRLHVESLKKLGKQAQGCKMVTLWLAALKPYSLEHMVEPVTFWVRVKMDASRAGDKELQLQTLRDSLSCWDPETQSLLLREELRAYKSVRADTGQERFNIICDLLELSPEETAAGAWARATYLVELAQVLCYHNFTQQTNCSALDAVQEALQLLESVSPEAQEQDRLLDDKAQALLWLYICTLEAKMQEGIERDRRAQAPSNLEEFEVNDLNYEDKLQEDRFLYSSIAFNLAADAAQSKCLDQALTLWKEVLTKGRAPAVRCLQQTAASLQILAAVYQLVAKPLQALETLLLLQIVSKRLQDHAKAASSSCQLTQLLLNLGCPSYAQLYLEEAESSLRSLDQTSDACQLLSLTCALLGSQLCWACQKVTAGVSLLLSVLRDPALQKSSKAWYLLRVQALQVLAFYLSLSSNLLSSALREQLWDQGWQTPETALIDAHKLLRSIIILLMGSDVLSIQKAATESPFLDYGENLVQKWQVLTEVLTCSERLVGRLGRLGNVSEAKAFCLEALKLTTKLQIPRQCALFLVLKGELELARGDIDLCQSDLQQVLFLLESSTEFGVVTQHPDSVKKVHTQKGKHKAQGPCFPPLSEEEPFLKGPALELVDTVLNEPGPIQSSVNSSPVLKTKPPPNPGFLSHLPSCDCLLCASPALSAVCLRWVLVTAGVRLATGHKAQGLDLLQAVLTRCPAATKRFTQSLQASLNHRTTPSCVPSLFDEIMAQVYTHLALEFLNQTSEKSLGKVLASGLKFVATRIQSLEIWRAHLLLVQALAKLAHFSCCTSELFASSWGWHPPLVKSLPVLEPAKIRRQKCSGRGRRRIASVPPPLHNSSQKGLEEEGPPCTPKPPGRARQAGPRVPFTIFEEVHPTKSKLQVPLAPRVHRRAQTRLKVIFSDDSDLEDLVSADTQLVEEPKRRGTASRTRGQTRKGRSLKTDAVVAIESTPGHSSVSGRTRRARKVASRNCEEESPKAPLCVWASQGPEIMRSIPEEEPVDNHLEKSFEILRGSDGEDSASGEKAAAADTGLPVGECEVLRRDSSKAERPVLYSDTEANSDPSPWLPPFSVPAPIDLSTLDSISDSLSIAFRGVSHCPPSGLYAHLCRFLALCLGHRDPYATAFLVAESISITCRHQLLTHLHRQLSKAQKQQESPELAEHLQRLDLKERPGGVPLARIQRLFSFKALGSGCFPQAEKESFQERLALIPSGVTVCVLALATLQPGTLSNTLLLTRLEKDNPPITVKIPTAQNKLPLSAVLKEFDAIQKDQKENSSCTEKRVWWTGRLALDQRMEALITALEEQVLGCWRGLLLPCSADPSLAQEASKLQELLRECGWEYPDSTLLKVILSGARILTSQDVQALACGLCPAQPDRAQVLLSEAVGQVQSQEAPRSQHLVLVLDKDLQKLPWESTPILQAQPVTRLPSFRFLLSYTVTKEAGASSVLSQGVDPQNTFYVLNPHSNLSSTEERFRASFSSETGWKGVIGEVPSLDQVQAALTERDLYIYAGHGAGARFLDGQAVLRLSCRAVALLFGCSSAALAVHGNLEGAGIVLKYIMAGCPLFLGNLWDVTDRDIDRYTEALLQGWLGAGPGAPFLYYASQARQAPRLKYLIGAAPVAYGLPISLQTP.

The residue at position 1121 (Ser-1121) is a Phosphoserine. Residues 1309-1318 show a composition bias toward basic residues; that stretch reads KCSGRGRRRI. The tract at residues 1309–1352 is disordered; the sequence is KCSGRGRRRIASVPPPLHNSSQKGLEEEGPPCTPKPPGRARQAG. Phosphoserine occurs at positions 1391 and 1394. Residues 1408–1428 are disordered; it reads EEPKRRGTASRTRGQTRKGRS. Ser-1504 carries the post-translational modification Phosphoserine. Residues 1941 to 2036 enclose the Peptidase C50 domain; that stretch reads PQNTFYVLNP…SAALAVHGNL (96 aa). The active site involves Cys-2025.

As to quaternary structure, interacts with PTTG1. Interacts with RAD21. In terms of processing, autocleaves. This function, which is not essential for its protease activity, is unknown. Post-translationally, phosphorylated by CDK1. There is 8 Ser/Thr phosphorylation sites. Among them, only Ser-1121 phosphorylation is the major site, which conducts to the enzyme inactivation.

The protein resides in the cytoplasm. It is found in the nucleus. It carries out the reaction All bonds known to be hydrolyzed by this endopeptidase have arginine in P1 and an acidic residue in P4. P6 is often occupied by an acidic residue or by a hydroxy-amino-acid residue, the phosphorylation of which enhances cleavage.. With respect to regulation, regulated by at least two independent mechanisms. First, it is inactivated via its interaction with securin/PTTG1, which probably covers its active site. The association with PTTG1 is not only inhibitory, since PTTG1 is also required for activating it, the enzyme being inactive in cells in which PTTG1 is absent. PTTG1 degradation at anaphase, liberates it and triggers RAD21 cleavage. Second, phosphorylation at Ser-1121 inactivates it. The complete phosphorylation during mitosis, is removed when cells undergo anaphase. Activation of the enzyme at the metaphase-anaphase transition probably requires the removal of both securin and inhibitory phosphate. Its function is as follows. Caspase-like protease, which plays a central role in the chromosome segregation by cleaving the SCC1/RAD21 subunit of the cohesin complex at the onset of anaphase. During most of the cell cycle, it is inactivated by different mechanisms. The chain is Separin (Espl1) from Mus musculus (Mouse).